We begin with the raw amino-acid sequence, 292 residues long: NAC domain-containing protein 96 (292 aa).

The 153-residue stretch at 6-158 (LPPGFRFHPT…AFVLCRVAMK (153 aa)) folds into the NAC domain. Residues 106-164 (IGYRKTLVFYKGRAPLGDRSNWIMHEYRLCDDDTSQGSQNLKGAFVLCRVAMKNEIKTN) mediate DNA binding. Residues 171–199 (PSEQTIGSGESSGLSSRVTSPSRDETMPF) are disordered. Residues 172 to 191 (SEQTIGSGESSGLSSRVTSP) show a composition bias toward polar residues.

As to quaternary structure, interacts with ABF2 and ABF4. Expressed in roots, rosettes leaves, cauline leaves and stems.

The protein localises to the nucleus. Functionally, transcriptional activator involved in the positive regulation of abscisic acid (ABA) responsive genes. Acts as a positive factor of ABA-mediated responses. Involved in the transcriptional activation of ABA-inducible genes in response to dehydration and osmotic stresses. Plays a positive role in both stomatal closure and water loss under dehydration stress conditions. Acts synergistically with ABF2 to activate the dehydration stress-response factor RD29A transcription. Binds to the consensus core cis-acting elements 5'-CGTA-3' and 5'-CACG-3' at the RD29A promoter. Involved in hypocotyl graft union formation. Required for the auxin-mediated promotion of vascular tissue proliferation during hypocotyl graft attachment. The polypeptide is NAC domain-containing protein 96 (Arabidopsis thaliana (Mouse-ear cress)).